The chain runs to 339 residues: Phenylalanine--tRNA ligase alpha subunit (339 aa).

Glu-254 provides a ligand contact to Mg(2+).

It belongs to the class-II aminoacyl-tRNA synthetase family. Phe-tRNA synthetase alpha subunit type 1 subfamily. In terms of assembly, tetramer of two alpha and two beta subunits. It depends on Mg(2+) as a cofactor.

The protein localises to the cytoplasm. The enzyme catalyses tRNA(Phe) + L-phenylalanine + ATP = L-phenylalanyl-tRNA(Phe) + AMP + diphosphate + H(+). This chain is Phenylalanine--tRNA ligase alpha subunit, found in Clostridium kluyveri (strain ATCC 8527 / DSM 555 / NBRC 12016 / NCIMB 10680 / K1).